The primary structure comprises 346 residues: Sensor histidine kinase GraS (346 aa).

2 helical membrane passes run 15-35 (MNWI…SLID) and 43-63 (LFYI…LTYF). The 207-residue stretch at 126 to 332 (EFVHDIKTPV…TVRLIFPLQN (207 aa)) folds into the Histidine kinase domain.

In terms of assembly, interacts with GraX.

It is found in the cell membrane. It catalyses the reaction ATP + protein L-histidine = ADP + protein N-phospho-L-histidine.. Functionally, member of the two-component regulatory system GraR/GraS involved in resistance against cationic antimicrobial peptides (CAMPs). Functions as a sensor protein kinase which phosphorylates GraR through the auxiliary protein GraX. In turn, GraR up-regulates many genes such as adhesins, exoproteins, transporters, toxins, and proteins involved in cell wall synthesis. Down-regulates the expression of many genes involved in RNA and amino acid synthesis or glycolysis. This Staphylococcus aureus (strain COL) protein is Sensor histidine kinase GraS (graS).